A 528-amino-acid chain; its full sequence is RNA polymerase sigma factor SigA (528 aa).

Polar residues predominate over residues 1–10 (MAATKASTAT). Positions 1–211 (MAATKASTAT…FVWDEDESEA (211 aa)) are disordered. 3 stretches are compositionally biased toward low complexity: residues 19-31 (TKSPAASASGAKT), 38-56 (AKSASGSPPAKRATKPAAR), and 80-92 (AAKSAAAKAPSAR). Residues 100–109 (APKDAQHEAA) are compositionally biased toward basic and acidic residues. Positions 110-173 (TDPEDALDSV…DDEDHEDLEA (64 aa)) are enriched in acidic residues. The interval 295–365 (LLEANLRLVV…TRAMADQART (71 aa)) is sigma-70 factor domain-2. The short motif at 319 to 322 (DLIQ) is the Interaction with polymerase core subunit RpoC element. The segment at 374 to 450 (EVINKLGRIQ…DSEAVVAVDA (77 aa)) is sigma-70 factor domain-3. The interval 463–516 (VLDTLSEREAGVVRLRFGLTDGQPRTLDEIGQVYGVTRERIRQIESKTMSKLRH) is sigma-70 factor domain-4. The H-T-H motif DNA-binding region spans 489 to 508 (LDEIGQVYGVTRERIRQIES).

Belongs to the sigma-70 factor family. RpoD/SigA subfamily. In terms of assembly, interacts transiently with the RNA polymerase catalytic core.

The protein resides in the cytoplasm. Functionally, sigma factors are initiation factors that promote the attachment of RNA polymerase to specific initiation sites and are then released. This sigma factor is the primary sigma factor during exponential growth. In Mycobacterium bovis (strain ATCC BAA-935 / AF2122/97), this protein is RNA polymerase sigma factor SigA.